The following is a 348-amino-acid chain: Cylicin-2 (348 aa).

The interval 25-347 (KKSWNQQHFA…DEKKDAKKKG (323 aa)) is 31 X 3 AA repeats of K-K-X. 2 disordered regions span residues 35-59 (LLFP…DNTV) and 101-348 (PTRT…KKGK). Composition is skewed to basic and acidic residues over residues 103–159 (RTVE…DAKK), 166–217 (KDAE…EKDS), 238–267 (KADE…AKEI), and 276–342 (KPSS…EKKD). 3 repeat units span residues 157–184 (AKKD…EKGG), 185–212 (AKKD…EKGG), and 213–240 (TEKD…VKAD). Positions 157–240 (AKKDSKKGKK…AIELQAVKAD (84 aa)) are 3 X approximate tandem repeats.

In terms of tissue distribution, testis.

The protein localises to the cytoplasm. Its subcellular location is the cytoskeleton. It is found in the perinuclear theca. It localises to the calyx. Plays a role in the establishment of normal sperm morphology during spermatogenesis. It is required for acrosome attachment to the nuclear envelope, and proper manchette elongation and disassembly. The protein is Cylicin-2 (CYLC2) of Homo sapiens (Human).